Here is a 302-residue protein sequence, read N- to C-terminus: Nucleotide-binding protein Bcep1808_2900 (302 aa).

8–15 serves as a coordination point for ATP; the sequence is GISGSGKS. 57–60 is a binding site for GTP; it reads DARS.

It belongs to the RapZ-like family.

In terms of biological role, displays ATPase and GTPase activities. In Burkholderia vietnamiensis (strain G4 / LMG 22486) (Burkholderia cepacia (strain R1808)), this protein is Nucleotide-binding protein Bcep1808_2900.